Here is a 67-residue protein sequence, read N- to C-terminus: Conotoxin LiC33 (67 aa).

Residues 1–22 (MRCVPVFIILLLLSPSAPSVDA) form the signal peptide. The propeptide occupies 23-48 (HPKTKDDVPLASFHDDAKRTLQRLWI). Phe63 carries the post-translational modification Phenylalanine amide. A propeptide spanning residues 65–67 (KGK) is cleaved from the precursor.

The protein belongs to the conotoxin T superfamily. In terms of processing, contains 2 disulfide bonds that can be either 'C1-C3, C2-C4' or 'C1-C4, C2-C3', since these disulfide connectivities have been observed for conotoxins with cysteine framework V (for examples, see AC P0DQQ7 and AC P81755). Expressed by the venom duct.

The protein resides in the secreted. The chain is Conotoxin LiC33 from Conus lividus (Livid cone).